We begin with the raw amino-acid sequence, 331 residues long: Leucine-rich repeat-containing protein 26 (331 aa).

The first 26 residues, 1-26 (MRGSFFSRLPPQLSLLLLLSLRRVWT), serve as a signal peptide directing secretion. The Extracellular segment spans residues 27–261 (QEDIGTAPSK…QCTQSLAARD (235 aa)). One can recognise an LRRNT domain in the interval 34–71 (PSKSPVAPECPEACSCSLGGKANCSALALPAVPADLSW). Disulfide bonds link cysteine 43-cysteine 49 and cysteine 47-cysteine 57. LRR repeat units lie at residues 72–93 (QVRS…AFAN), 96–117 (ALLY…AFWG), 120–141 (VLQW…TFAP), 144–165 (ALSF…ILGP), and 168–191 (LLRV…NNLP). In terms of domain architecture, LRRCT spans 201-255 (NPWTCNCALRPLCTWLRKHPRPASETETLLCVSPRLQTLSLLTAFPDAAFKQCTQ). 2 disulfide bridges follow: cysteine 205-cysteine 231 and cysteine 207-cysteine 253. Residues 262–282 (LAVVYALGPVSFLASLAICLA) traverse the membrane as a helical segment. Over 283–331 (LGSVLTACGARRRRRRRTTVRHLLRRQLDPEGPPSLEDAGSPVTAAIQA) the chain is Cytoplasmic. Residues 310–331 (LDPEGPPSLEDAGSPVTAAIQA) are disordered.

In terms of assembly, interacts with KCNMA1.

The protein resides in the cell membrane. Its subcellular location is the cytoplasm. It localises to the cytoskeleton. Auxiliary protein of the large-conductance, voltage and calcium-activated potassium channel (BK alpha). Required for the conversion of BK alpha channels from a high-voltage to a low-voltage activated channel type in non-excitable cells. These are characterized by negative membrane voltages and constant low levels of calcium. This chain is Leucine-rich repeat-containing protein 26 (Lrrc26), found in Mus musculus (Mouse).